We begin with the raw amino-acid sequence, 30 residues long: Cycloviolin-D (30 aa).

A cross-link (cyclopeptide (Gly-Asn)) is located at residues Gly-1–Asn-30. Cystine bridges form between Cys-4–Cys-20, Cys-8–Cys-22, and Cys-13–Cys-27.

In terms of processing, this is a cyclic peptide.

In terms of biological role, probably participates in a plant defense mechanism. Has anti-HIV activity. The sequence is that of Cycloviolin-D from Leonia cymosa (Sacha uba).